The chain runs to 124 residues: MATINQLVRKPRSVKAAKSNVPALEACPQKRGVCTRVYTTTPKKPNSALRKVCRVRLTNGFEVTSYIGGEGHNLQEHSVILIRGGRVKDLPGVRYHTVRGALDCSGVKDRKQARSKYGVKKPKA.

At aspartate 89 the chain carries 3-methylthioaspartic acid.

It belongs to the universal ribosomal protein uS12 family. As to quaternary structure, part of the 30S ribosomal subunit. Contacts proteins S8 and S17. May interact with IF1 in the 30S initiation complex.

In terms of biological role, with S4 and S5 plays an important role in translational accuracy. Functionally, interacts with and stabilizes bases of the 16S rRNA that are involved in tRNA selection in the A site and with the mRNA backbone. Located at the interface of the 30S and 50S subunits, it traverses the body of the 30S subunit contacting proteins on the other side and probably holding the rRNA structure together. The combined cluster of proteins S8, S12 and S17 appears to hold together the shoulder and platform of the 30S subunit. The protein is Small ribosomal subunit protein uS12 of Serratia proteamaculans (strain 568).